The chain runs to 835 residues: Lon protease (835 aa).

The Lon N-terminal domain occupies 36-234 (VHVFPLLRRP…KALILLKKEL (199 aa)). 387 to 394 (GPPGVGKT) provides a ligand contact to ATP. A Lon proteolytic domain is found at 646–828 (RTPVGVCMGL…DQVFKISFPN (183 aa)). Active-site residues include serine 734 and lysine 777.

Belongs to the peptidase S16 family. Homohexamer. Organized in a ring with a central cavity.

The protein localises to the cytoplasm. It carries out the reaction Hydrolysis of proteins in presence of ATP.. Functionally, ATP-dependent serine protease that mediates the selective degradation of mutant and abnormal proteins as well as certain short-lived regulatory proteins. Required for cellular homeostasis and for survival from DNA damage and developmental changes induced by stress. Degrades polypeptides processively to yield small peptide fragments that are 5 to 10 amino acids long. Binds to DNA in a double-stranded, site-specific manner. The polypeptide is Lon protease (Protochlamydia amoebophila (strain UWE25)).